The chain runs to 561 residues: V-type proton ATPase catalytic subunit A (561 aa).

Residue 190 to 197 (GAFGCGKT) coordinates ATP.

The protein belongs to the ATPase alpha/beta chains family. In terms of assembly, V-ATPase is a heteromultimeric enzyme composed of a peripheral catalytic V1 complex (main components: subunits A, B, C, D, E, and F) attached to an integral membrane V0 proton pore complex (main component: the proteolipid protein). In terms of tissue distribution, high expression in the mesocotyl tip of etiolated seedlings compared to the base.

The catalysed reaction is ATP + H2O + 4 H(+)(in) = ADP + phosphate + 5 H(+)(out). Catalytic subunit of the peripheral V1 complex of vacuolar ATPase. V-ATPase vacuolar ATPase is responsible for acidifying a variety of intracellular compartments in eukaryotic cells. The chain is V-type proton ATPase catalytic subunit A from Zea mays (Maize).